Consider the following 1297-residue polypeptide: Cingulin-like protein 1 (1297 aa).

A head region spans residues 1–550 (MELYFGEYQH…ELTQQTNEET (550 aa)). The ZIM signature appears at 37–51 (AGSYGVSIRVQGIDG). Residues S113, S203, and S257 each carry the phosphoserine modification. Disordered stretches follow at residues 161–208 (NEVN…TSED), 245–306 (GVGE…TPTS), 364–396 (KPGLQRRGRSGKRNRINPDDRKRSRSVDSAFPF), and 428–467 (QRSVAQEHRGKHSPSSPPAKLQGAQGAHPKPPLQNKDGKV). The span at 197–206 (YGSQPNSPTS) shows a compositional bias: polar residues. The span at 268–283 (ETKKNRPDVLPFRRQD) shows a compositional bias: basic and acidic residues. 3 positions are modified to phosphoserine: S284, S298, and S299. Residues 297-306 (SSSSSTTPTS) show a composition bias toward low complexity. Residues 367–378 (LQRRGRSGKRNR) show a composition bias toward basic residues. Positions 379–389 (INPDDRKRSRS) are enriched in basic and acidic residues. Residues S389 and S392 each carry the phosphoserine modification. S482 is subject to Phosphoserine. A disordered region spans residues 586-608 (SRAAGSAQGSNQAPNSPSEGNSL). Over residues 592–608 (AQGSNQAPNSPSEGNSL) the composition is skewed to polar residues. The stretch at 604–1251 (EGNSLLDQKN…LQGQLNSLKK (648 aa)) forms a coiled coil. 2 positions are modified to phosphoserine: S678 and S704. Positions 1259–1297 (SSKVLDDSDDDDLSSDAGSLYEAPLSYAFPKDSTIASQI) are tail.

The protein belongs to the cingulin family. In terms of assembly, homodimer or oligomer. Interacts with CD2AP and SH3BP1; probably part of a complex at cell junctions. As to expression, widely expressed. Highly expressed in the kidney and lung.

It localises to the cell junction. The protein localises to the tight junction. In terms of biological role, may be involved in anchoring the apical junctional complex, especially tight junctions, to actin-based cytoskeletons. The chain is Cingulin-like protein 1 from Mus musculus (Mouse).